The following is a 456-amino-acid chain: Cyclic AMP-responsive element-binding protein 3-like protein 3 (456 aa).

Disordered stretches follow at residues Met1–Ile20 and Gly47–Cys120. The Cytoplasmic segment spans residues Met1–Thr317. The segment covering Asp71–Gly85 has biased composition (polar residues). Residues Met238–Leu301 enclose the bZIP domain. The interval Lys240 to Arg269 is basic motif. Residues Leu280–Leu301 are leucine-zipper. Residue Lys289 forms a Glycyl lysine isopeptide (Lys-Gly) (interchain with G-Cter in ubiquitin) linkage. Residues Cys318 to Ala338 form a helical; Signal-anchor for type II membrane protein membrane-spanning segment. At Ser339 to Leu456 the chain is on the lumenal side. Disordered regions lie at residues Arg365–Ser423 and Cys435–Leu456. N-linked (GlcNAc...) asparagine glycosylation is found at Asn408 and Asn415.

Belongs to the bZIP family. ATF subfamily. In terms of assembly, binds DNA as a dimer. May form homodimers. Interacts with ATF6. Interacts with SYNV1/HRD1; this interaction leads to CREB3L3 ubiquitination and proteasomal degradation. Post-translationally, controlled by regulated intramembrane proteolysis (RIP). Following ER stress a fragment containing the cytoplasmic transcription factor domain is released by proteolysis. The cleavage seems to be performed sequentially by site-1 and site-2 proteases (PS1 and PS2). In terms of processing, N-glycosylation is required for optimal proteolytic activation. Ubiquitinated at Lys-289 by SYNV1/HRD1 via 'Lys-27'-linked ubiquitin.

The protein resides in the endoplasmic reticulum membrane. It localises to the nucleus. Functionally, transcription factor that may act during endoplasmic reticulum stress by activating unfolded protein response target genes. Activated in response to cAMP stimulation. In vitro, binds the cAMP response element (CRE). Activates transcription through box-B element and CRE. Seems to function synergistically with ATF6. In acute inflammatory response, may activate expression of acute phase response (APR) genes. May be involved in growth suppression. Regulates FGF21 transcription. Plays a crucial role in the regulation of triglyceride metabolism and is required for the maintenance of normal plasma triglyceride concentrations. In Bos taurus (Bovine), this protein is Cyclic AMP-responsive element-binding protein 3-like protein 3 (CREB3L3).